A 177-amino-acid polypeptide reads, in one-letter code: MSKIGKLPVAIPAGVTASLDGQTVKVKGPKGALEVTLVEEIAAKIEGSELKVSMNGETTRHKAMWGMSRTLVANLVEGVTKGFEKKLEITGVGYKAAVQGKNLNLSLGYSHDVIYAIPEGIQIVTPKPTEVVISGIDRQKVGQVAAEIREFRGPEPYKGKGVKYAGEFIFRKEGKKK.

Belongs to the universal ribosomal protein uL6 family. In terms of assembly, part of the 50S ribosomal subunit.

This protein binds to the 23S rRNA, and is important in its secondary structure. It is located near the subunit interface in the base of the L7/L12 stalk, and near the tRNA binding site of the peptidyltransferase center. This is Large ribosomal subunit protein uL6 from Xanthobacter autotrophicus (strain ATCC BAA-1158 / Py2).